The following is a 416-amino-acid chain: Probable intermembrane transport protein HI_1671 (416 aa).

8 consecutive transmembrane segments (helical) span residues 62-82, 107-127, 138-158, 172-192, 263-283, 306-326, 347-367, and 377-397; these read ILIL…LLGI, IFIC…MLWL, VLLF…LVAL, EINI…LLFI, LIAG…GIYL, FVAF…IFIM, LLHL…VLAL, and IINF…FCTM.

This sequence belongs to the PqiA family.

Its subcellular location is the cell inner membrane. This chain is Probable intermembrane transport protein HI_1671, found in Haemophilus influenzae (strain ATCC 51907 / DSM 11121 / KW20 / Rd).